The sequence spans 245 residues: Orotidine 5'-phosphate decarboxylase (245 aa).

Substrate contacts are provided by residues D22, K44, 71 to 80, T131, R192, Q201, G221, and R222; that span reads DLKFHDIPNT. The active-site Proton donor is the K73.

Belongs to the OMP decarboxylase family. Type 1 subfamily. As to quaternary structure, homodimer.

It carries out the reaction orotidine 5'-phosphate + H(+) = UMP + CO2. Its pathway is pyrimidine metabolism; UMP biosynthesis via de novo pathway; UMP from orotate: step 2/2. Catalyzes the decarboxylation of orotidine 5'-monophosphate (OMP) to uridine 5'-monophosphate (UMP). The protein is Orotidine 5'-phosphate decarboxylase of Escherichia coli O157:H7.